We begin with the raw amino-acid sequence, 213 residues long: Ras-related protein Rab-25 (213 aa).

The GTP site is built by Ser-21, Gly-24, Lys-25, Thr-26, Asn-27, Ser-38, His-39, Thr-43, and Thr-44. Residue Thr-26 coordinates Mg(2+). 2 consecutive short sequence motifs (switch) follow at residues 35-49 and 67-84; these read NEFSHDSRTTIGVEF and DTAGLERYRAITSAYYRG. Residues Thr-44 and Asp-67 each coordinate Mg(2+). GTP is bound by residues Gly-70, Asn-125, Lys-126, Asp-128, Ala-156, and Leu-157. S-geranylgeranyl cysteine attachment occurs at residues Cys-209 and Cys-210. At Cys-210 the chain carries Cysteine methyl ester. Residues 211–213 constitute a propeptide, removed in mature form; that stretch reads ISL.

It belongs to the small GTPase superfamily. Rab family. Interacts (GTP-bound form) with RAB11FIP1, RAB11FIP2, RAB11FIP3 and RAB11FIP4. Interacts (via the hypervariable C-terminal region) with ITGB1 (via the cytoplasmic region); the interaction is GTP-dependent. Interacts with ITGAV. Associates with the integrin alpha-V/beta-1 heterodimer. Interacts with VPS33B. The cofactor is Mg(2+).

The protein localises to the cell membrane. It localises to the cell projection. It is found in the pseudopodium membrane. The protein resides in the cytoplasmic vesicle. The enzyme catalyses GTP + H2O = GDP + phosphate + H(+). With respect to regulation, regulated by guanine nucleotide exchange factors (GEFs) which promote the exchange of bound GDP for free GTP. Regulated by GTPase activating proteins (GAPs) which increase the GTP hydrolysis activity. Inhibited by GDP dissociation inhibitors (GDIs) which prevent Rab-GDP dissociation. In terms of biological role, the small GTPases Rab are key regulators of intracellular membrane trafficking, from the formation of transport vesicles to their fusion with membranes. Rabs cycle between an inactive GDP-bound form and an active GTP-bound form that is able to recruit to membranes different set of downstream effectors directly responsible for vesicle formation, movement, tethering and fusion. RAB25 regulates epithelial cell differentiation, proliferation and survival, thereby playing key roles in tumorigenesis. Promotes invasive migration of cells in which it functions to localize and maintain integrin alpha-V/beta-1 at the tips of extending pseudopodia. Involved in the regulation of epithelial morphogenesis through the control of CLDN4 expression and localization at tight junctions. May selectively regulate the apical recycling pathway. Together with MYO5B regulates transcytosis. This is Ras-related protein Rab-25 (RAB25) from Bos taurus (Bovine).